We begin with the raw amino-acid sequence, 104 residues long: Large ribosomal subunit protein bL21 (104 aa).

It belongs to the bacterial ribosomal protein bL21 family. As to quaternary structure, part of the 50S ribosomal subunit. Contacts protein L20.

Functionally, this protein binds to 23S rRNA in the presence of protein L20. This is Large ribosomal subunit protein bL21 from Nitrosococcus oceani (strain ATCC 19707 / BCRC 17464 / JCM 30415 / NCIMB 11848 / C-107).